Reading from the N-terminus, the 26-residue chain is Maculatin-3.1 (26 aa).

Ala-26 bears the Alanine amide mark.

As to expression, expressed by the skin dorsal glands.

The protein localises to the secreted. Its function is as follows. Shows antibacterial activity against S.uberis. The protein is Maculatin-3.1 of Ranoidea genimaculata (Brown-spotted tree frog).